The chain runs to 265 residues: Cell division protein DivIB (265 aa).

Topologically, residues methionine 1 to arginine 30 are cytoplasmic. Residues leucine 31–proline 51 traverse the membrane as a helical segment. Over leucine 52 to serine 265 the chain is Extracellular. A POTRA domain is found at serine 53–tyrosine 121.

Belongs to the FtsQ/DivIB family. DivIB subfamily.

The protein localises to the cell membrane. Functionally, cell division protein that may be involved in stabilizing or promoting the assembly of the division complex. The protein is Cell division protein DivIB of Bacillus anthracis.